The following is a 483-amino-acid chain: Regulatory protein ViaA (483 aa).

Belongs to the ViaA family. As to quaternary structure, homodimer. Interacts with RavA.

The protein resides in the cytoplasm. In terms of biological role, component of the RavA-ViaA chaperone complex, which may act on the membrane to optimize the function of some of the respiratory chains. ViaA stimulates the ATPase activity of RavA. The chain is Regulatory protein ViaA from Shigella dysenteriae serotype 1 (strain Sd197).